A 279-amino-acid polypeptide reads, in one-letter code: Movement protein (279 aa).

A disordered region spans residues Ser-246–Leu-279. Positions Glu-254–Ser-268 are enriched in low complexity.

This sequence belongs to the cucumovirus movement protein family.

The protein localises to the host cell junction. The protein resides in the host plasmodesma. Transports viral genome to neighboring plant cells directly through plasmosdesmata, without any budding. The movement protein allows efficient cell to cell propagation, by bypassing the host cell wall barrier. Acts by forming a tubular structure at the host plasmodesmata, enlarging it enough to allow free passage of virion capsids. The sequence is that of Movement protein from Cucumber mosaic virus (strain O) (CMV).